The following is a 159-amino-acid chain: Putative 4-hydroxy-4-methyl-2-oxoglutarate aldolase (159 aa).

Substrate contacts are provided by residues 75–78 and Arg-97; that span reads GDQL. Asp-98 contributes to the a divalent metal cation binding site.

Belongs to the class II aldolase/RraA-like family. As to quaternary structure, homotrimer. Requires a divalent metal cation as cofactor.

It carries out the reaction 4-hydroxy-4-methyl-2-oxoglutarate = 2 pyruvate. The enzyme catalyses oxaloacetate + H(+) = pyruvate + CO2. Its function is as follows. Catalyzes the aldol cleavage of 4-hydroxy-4-methyl-2-oxoglutarate (HMG) into 2 molecules of pyruvate. Also contains a secondary oxaloacetate (OAA) decarboxylase activity due to the common pyruvate enolate transition state formed following C-C bond cleavage in the retro-aldol and decarboxylation reactions. In Aromatoleum aromaticum (strain DSM 19018 / LMG 30748 / EbN1) (Azoarcus sp. (strain EbN1)), this protein is Putative 4-hydroxy-4-methyl-2-oxoglutarate aldolase.